We begin with the raw amino-acid sequence, 1084 residues long: Cellulose synthase A catalytic subunit 2 [UDP-forming] (1084 aa).

Position 1 is an N-acetylmethionine (Met1). At 1 to 278 the chain is on the cytoplasmic side; it reads MNTGGRLIAG…RSSRINPYRM (278 aa). Residues Cys39, Cys42, Cys58, Cys61, Cys66, Cys69, Cys81, and Cys84 each coordinate Zn(2+). The RING-type; degenerate zinc finger occupies 39–85; the sequence is CQICGDEIELTVSSELFVACNECAFPVCRPCYEYERREGNQACPQCK. The interval 230 to 259 is disordered; it reads IKHEGGNNGRGSNDDDELDDPDMPMMDEGR. A helical transmembrane segment spans residues 279–299; the sequence is LILCRLAILGLFFHYRILHPV. At 300–301 the chain is on the extracellular side; the sequence is ND. Residues 302–322 traverse the membrane as a helical segment; sequence AYGLWLTSVICEIWFAVSWIL. Over 323-867 the chain is Cytoplasmic; it reads DQFPKWYPIE…INSVVYPWTS (545 aa). The UDP-alpha-D-glucose site is built by Ser361, Lys367, Glu368, and Asp397. Asp397 is an active-site residue. A coiled-coil region spans residues 451-477; it reads VRERRAMKRDYEEFKVKINALVATAQK. UDP-alpha-D-glucose is bound at residue Lys538. Residues Lys539 and Asp563 each contribute to the Mn(2+) site. Asp784 is a catalytic residue. The helical transmembrane segment at 868–888 threads the bilayer; sequence LPLIVYCSLPAVCLLTGKFIV. The Extracellular segment spans residues 889–893; that stretch reads PEISN. The helical transmembrane segment at 894-914 threads the bilayer; the sequence is YAGILFMLMFISIAVTGILEM. The Cytoplasmic segment spans residues 915–929; it reads QWGGVGIDDWWRNEQ. The helical transmembrane segment at 930–950 threads the bilayer; the sequence is FWVIGGASSHLFALFQGLLKV. The Extracellular portion of the chain corresponds to 951 to 979; it reads LAGVNTNFTVTSKAADDGAFSELYIFKWT. N-linked (GlcNAc...) asparagine glycosylation is present at Asn957. A helical membrane pass occupies residues 980-1000; sequence TLLIPPTTLLIINIIGVIVGV. The Cytoplasmic segment spans residues 1001 to 1011; that stretch reads SDAISNGYDSW. A helical transmembrane segment spans residues 1012 to 1032; sequence GPLFGRLFFALWVIVHLYPFL. Topologically, residues 1033–1041 are extracellular; that stretch reads KGMLGKQDK. Residues 1042–1062 traverse the membrane as a helical segment; it reads MPTIIVVWSILLASILTLLWV. Topologically, residues 1063–1084 are cytoplasmic; the sequence is RVNPFVAKGGPVLEICGLNCGN.

It belongs to the glycosyltransferase 2 family. Plant cellulose synthase subfamily. As to quaternary structure, homodimer. Interaction through zinc finger domain. Mn(2+) is required as a cofactor. The cofactor is Zn(2+). In terms of tissue distribution, strongly and ubiquitously expressed. Localized in some dividing and expanding cells, as well as in vascular tissues.

The protein resides in the cell membrane. It carries out the reaction [(1-&gt;4)-beta-D-glucosyl](n) + UDP-alpha-D-glucose = [(1-&gt;4)-beta-D-glucosyl](n+1) + UDP + H(+). It participates in glycan metabolism; plant cellulose biosynthesis. Functionally, catalytic subunit of cellulose synthase terminal complexes ('rosettes'), required for beta-1,4-glucan microfibril crystallization, a major mechanism of the cell wall formation. Involved in the primary cell wall formation. This Arabidopsis thaliana (Mouse-ear cress) protein is Cellulose synthase A catalytic subunit 2 [UDP-forming].